We begin with the raw amino-acid sequence, 377 residues long: Phosphoserine aminotransferase (377 aa).

Arg43 serves as a coordination point for L-glutamate. Pyridoxal 5'-phosphate contacts are provided by Trp105, Thr164, Asp189, and Gln212. The residue at position 213 (Lys213) is an N6-(pyridoxal phosphate)lysine. 254-255 (NT) is a pyridoxal 5'-phosphate binding site.

The protein belongs to the class-V pyridoxal-phosphate-dependent aminotransferase family. SerC subfamily. Homodimer. Pyridoxal 5'-phosphate is required as a cofactor.

It is found in the cytoplasm. The enzyme catalyses O-phospho-L-serine + 2-oxoglutarate = 3-phosphooxypyruvate + L-glutamate. It catalyses the reaction 4-(phosphooxy)-L-threonine + 2-oxoglutarate = (R)-3-hydroxy-2-oxo-4-phosphooxybutanoate + L-glutamate. It participates in amino-acid biosynthesis; L-serine biosynthesis; L-serine from 3-phospho-D-glycerate: step 2/3. Its pathway is cofactor biosynthesis; pyridoxine 5'-phosphate biosynthesis; pyridoxine 5'-phosphate from D-erythrose 4-phosphate: step 3/5. Functionally, catalyzes the reversible conversion of 3-phosphohydroxypyruvate to phosphoserine and of 3-hydroxy-2-oxo-4-phosphonooxybutanoate to phosphohydroxythreonine. The polypeptide is Phosphoserine aminotransferase (Bordetella bronchiseptica (strain ATCC BAA-588 / NCTC 13252 / RB50) (Alcaligenes bronchisepticus)).